Reading from the N-terminus, the 178-residue chain is ATP synthase subunit delta (178 aa).

The protein belongs to the ATPase delta chain family. In terms of assembly, F-type ATPases have 2 components, F(1) - the catalytic core - and F(0) - the membrane proton channel. F(1) has five subunits: alpha(3), beta(3), gamma(1), delta(1), epsilon(1). F(0) has three main subunits: a(1), b(2) and c(10-14). The alpha and beta chains form an alternating ring which encloses part of the gamma chain. F(1) is attached to F(0) by a central stalk formed by the gamma and epsilon chains, while a peripheral stalk is formed by the delta and b chains.

Its subcellular location is the cell inner membrane. Functionally, f(1)F(0) ATP synthase produces ATP from ADP in the presence of a proton or sodium gradient. F-type ATPases consist of two structural domains, F(1) containing the extramembraneous catalytic core and F(0) containing the membrane proton channel, linked together by a central stalk and a peripheral stalk. During catalysis, ATP synthesis in the catalytic domain of F(1) is coupled via a rotary mechanism of the central stalk subunits to proton translocation. Its function is as follows. This protein is part of the stalk that links CF(0) to CF(1). It either transmits conformational changes from CF(0) to CF(1) or is implicated in proton conduction. The protein is ATP synthase subunit delta of Thioalkalivibrio sulfidiphilus (strain HL-EbGR7).